The following is a 336-amino-acid chain: Ribosomal RNA large subunit methyltransferase F (336 aa).

The span at 212 to 231 (HHLERSRGKPTGKGVRRVRS) shows a compositional bias: basic residues. A disordered region spans residues 212-234 (HHLERSRGKPTGKGVRRVRSGRM).

Belongs to the methyltransferase superfamily. METTL16/RlmF family.

The protein resides in the cytoplasm. The catalysed reaction is adenosine(1618) in 23S rRNA + S-adenosyl-L-methionine = N(6)-methyladenosine(1618) in 23S rRNA + S-adenosyl-L-homocysteine + H(+). Its function is as follows. Specifically methylates the adenine in position 1618 of 23S rRNA. This Methylobacillus flagellatus (strain ATCC 51484 / DSM 6875 / VKM B-1610 / KT) protein is Ribosomal RNA large subunit methyltransferase F.